A 667-amino-acid chain; its full sequence is E3 ubiquitin-protein ligase Midline-1 (667 aa).

The RING-type zinc finger occupies 10–60 (CPICLELFEDPLLLPCAHSLCFNCAHRILVSHCATNEPVESINAFQCPTCR). 2 positions are modified to phosphoserine: S92 and S96. 2 consecutive B box-type zinc fingers follow at residues 116 to 165 (KVLC…IEPI) and 172 to 212 (GLMC…VAAL). Residues C119, C122, C134, C137, C142, C145, H150, H159, C175, H178, C198, and H204 each coordinate Zn(2+). Residues 205 to 264 (RDHQVAALSERYDKLKQNLESNLTNLIKRNTELETLLAKLIQTCQHVEVNASRQEAKLTE) are a coiled coil. Residues 320 to 379 (LKENDHARFLQTAKNITERVSMATASSQVLIPEINLNDTFDTFALDFSREKKLLECLDYL) enclose the COS domain. The Fibronectin type-III domain maps to 381–484 (APNPPTIREE…EPGKLKTNSQ (104 aa)). Residues 471 to 485 (SRSSEPGKLKTNSQP) are compositionally biased toward polar residues. Positions 471 to 524 (SRSSEPGKLKTNSQPFKLDPKSAHRKLKVSHDNLTVERDESSSKKSHTPERFTS) are disordered. The B30.2/SPRY domain maps to 482-659 (NSQPFKLDPK…IITGLPIPDH (178 aa)). Positions 499–520 (VSHDNLTVERDESSSKKSHTPE) are enriched in basic and acidic residues. A Phosphoserine modification is found at S511.

The protein belongs to the TRIM/RBCC family. As to quaternary structure, homodimer or heterodimer with MID2. Interacts with IGBP1.

Its subcellular location is the cytoplasm. It is found in the cytoskeleton. It catalyses the reaction S-ubiquitinyl-[E2 ubiquitin-conjugating enzyme]-L-cysteine + [acceptor protein]-L-lysine = [E2 ubiquitin-conjugating enzyme]-L-cysteine + N(6)-ubiquitinyl-[acceptor protein]-L-lysine.. Functionally, has E3 ubiquitin ligase activity towards IGBP1, promoting its monoubiquitination, which results in deprotection of the catalytic subunit of protein phosphatase PP2A, and its subsequent degradation by polyubiquitination. The protein is E3 ubiquitin-protein ligase Midline-1 (Mid1) of Rattus norvegicus (Rat).